We begin with the raw amino-acid sequence, 581 residues long: Arginine--tRNA ligase (581 aa).

Positions 122 to 132 (PNVAKPMHVGH) match the 'HIGH' region motif.

The protein belongs to the class-I aminoacyl-tRNA synthetase family. Monomer.

Its subcellular location is the cytoplasm. It catalyses the reaction tRNA(Arg) + L-arginine + ATP = L-arginyl-tRNA(Arg) + AMP + diphosphate. This Francisella tularensis subsp. tularensis (strain FSC 198) protein is Arginine--tRNA ligase.